The primary structure comprises 391 residues: DNA-directed RNA polymerase subunit Rpo1C (391 aa).

The protein belongs to the RNA polymerase beta' chain family. As to quaternary structure, part of the RNA polymerase complex.

Its subcellular location is the cytoplasm. It carries out the reaction RNA(n) + a ribonucleoside 5'-triphosphate = RNA(n+1) + diphosphate. In terms of biological role, DNA-dependent RNA polymerase (RNAP) catalyzes the transcription of DNA into RNA using the four ribonucleoside triphosphates as substrates. Forms part of the jaw domain. The polypeptide is DNA-directed RNA polymerase subunit Rpo1C (Thermococcus onnurineus (strain NA1)).